We begin with the raw amino-acid sequence, 599 residues long: Elongation factor 4 (599 aa).

The tr-type G domain maps to 2–184 (KHIRNFSIIA…RLVRDIPAPE (183 aa)). Residues 14–19 (DHGKST) and 131–134 (NKID) each bind GTP.

Belongs to the TRAFAC class translation factor GTPase superfamily. Classic translation factor GTPase family. LepA subfamily.

The protein localises to the cell inner membrane. It carries out the reaction GTP + H2O = GDP + phosphate + H(+). Functionally, required for accurate and efficient protein synthesis under certain stress conditions. May act as a fidelity factor of the translation reaction, by catalyzing a one-codon backward translocation of tRNAs on improperly translocated ribosomes. Back-translocation proceeds from a post-translocation (POST) complex to a pre-translocation (PRE) complex, thus giving elongation factor G a second chance to translocate the tRNAs correctly. Binds to ribosomes in a GTP-dependent manner. This chain is Elongation factor 4, found in Yersinia pestis bv. Antiqua (strain Antiqua).